A 769-amino-acid polypeptide reads, in one-letter code: Scarecrow-like protein 14 (769 aa).

Disordered regions lie at residues 1-23 (MGSYPDGFPGSMDELDFNKDFDL), 128-157 (PSSSSASSVDHPERLASDSPDGSCSGGAFS), 279-320 (TEKK…ERSN), and 364-388 (TAQSNGAKIRGKKSTSTSHSNDSKK). Positions 384–765 (NDSKKETADL…RIVYASSLWV (382 aa)) constitute a GRAS domain. A leucine repeat I (LRI) region spans residues 391–451 (ADLRTLLVLC…EARLAGTGTQ (61 aa)). A VHIID region spans residues 470–536 (YQTYMSVCPF…GGSPKLRITG (67 aa)). Residues 501–505 (IHIID) carry the VHIID motif. A leucine repeat II (LRII) region spans residues 552-584 (ETGHRLARYCQRHNVPFEYNAIAQKWETIQVED). The tract at residues 593–687 (VVVNSLFRFR…KEFYGREIVN (95 aa)) is PFYRE. Residues 690 to 765 (ACEGTERVER…RIVYASSLWV (76 aa)) form an SAW region.

It belongs to the GRAS family. Expressed in roots, shoots, flowers and siliques.

It localises to the nucleus. Probable transcription factor involved in plant development. The protein is Scarecrow-like protein 14 (SCL14) of Arabidopsis thaliana (Mouse-ear cress).